A 22-amino-acid polypeptide reads, in one-letter code: Leptoglycin (22 aa).

A disordered region spans residues 1–22; sequence GLLGGLLGPLLGGGGGGGGGLL.

As to expression, expressed by the skin glands.

Its subcellular location is the secreted. Functionally, antimicrobial protein. Has antibacterial activity against the Gram-negative bacteria E.coli ATCC 28922 (MIC=50 uM), P.aeruginosa ATCC 9027 (MIC=8 uM) and C.freundii ATCC 8090 (MIC=75 uM). Does not have hemolytic activity. This Leptodactylus pentadactylus (Smokey jungle frog) protein is Leptoglycin.